A 61-amino-acid chain; its full sequence is MSDKKTVKVTLVKSLIGRIESHRACARGLGLKKLNQTVEVLDTPENRGMINKISFLVKCEG.

Belongs to the universal ribosomal protein uL30 family. As to quaternary structure, part of the 50S ribosomal subunit.

The sequence is that of Large ribosomal subunit protein uL30 from Laribacter hongkongensis (strain HLHK9).